The following is a 141-amino-acid chain: Nuclear transcription factor Y subunit B-1 (141 aa).

A disordered region spans residues 1–23 (MADTPSSPAGDGGESGGSVREQD). Ala2 is modified (N-acetylalanine). A DNA-binding region spans residues 26 to 32 (LPIANIS). The interval 53 to 64 (VQECVSEFISFI) is subunit association domain (SAD). Residues 114–141 (DNKGSGKSGDGSNRDAGGGVSGEEMPSW) form a disordered region.

It belongs to the NFYB/HAP3 subunit family. In terms of assembly, heterotrimeric transcription factor composed of three components, NF-YA, NF-YB and NF-YC. NF-YB and NF-YC must interact and dimerize for NF-YA association and DNA binding. Binds directly with DPB3-1. Ubiquitous. Predominantly expressed in leaves, flowers and siliques.

It is found in the nucleus. Component of the NF-Y/HAP transcription factor complex. The NF-Y complex stimulates the transcription of various genes by recognizing and binding to a CCAAT motif in promoters. This is Nuclear transcription factor Y subunit B-1 from Arabidopsis thaliana (Mouse-ear cress).